Here is a 496-residue protein sequence, read N- to C-terminus: Genome polyprotein (496 aa).

Residues 1 to 447 (SRCTHLENRD…HTVLGGAFNS (447 aa)) lie on the Extracellular side of the membrane. 6 disulfides stabilise this stretch: C3–C30, C60–C116, C60–C121, C74–C105, C92–C116, and C92–C121. Positions 98–111 (DRGWGNHCGLFGKG) are fusion peptide. N154 is a glycosylation site (N-linked (GlcNAc...) asparagine; by host). Disulfide bonds link C186–C290 and C307–C338. A helical membrane pass occupies residues 448-468 (IFGGVGFLPKLLMGVALAWLG). Residues 469-479 (LNTRNPTMSMS) lie on the Cytoplasmic side of the membrane. Residues 480 to 496 (FLMAGGLVLAMTLGVGA) traverse the membrane as a helical segment.

In terms of assembly, homodimer; in the endoplasmic reticulum and Golgi. N-glycosylated.

Its subcellular location is the virion membrane. It is found in the host endoplasmic reticulum membrane. Binds to host cell surface receptor and mediates fusion between viral and cellular membranes. Envelope protein is synthesized in the endoplasmic reticulum in the form of heterodimer with protein prM. They play a role in virion budding in the ER, and the newly formed immature particle is covered with 60 spikes composed of heterodimer between precursor prM and envelope protein E. The virion is transported to the Golgi apparatus where the low pH causes dissociation of PrM-E heterodimers and formation of E homodimers. prM-E cleavage is ineficient, and many virions are only partially matured. These uncleaved prM would play a role in immune evasion. The polypeptide is Genome polyprotein (Bos taurus (Bovine)).